We begin with the raw amino-acid sequence, 393 residues long: Mitogen-activated protein kinase SIPK (393 aa).

The span at 1–11 (MDGSGQQTDTM) shows a compositional bias: polar residues. The tract at residues 1-31 (MDGSGQQTDTMMSDAGAEQPPPAPQPVAGMD) is disordered. Positions 60-345 (KPPILPIGKG…VEGALAHPYL (286 aa)) constitute a Protein kinase domain. Residues 66-74 (IGKGAYGIV) and K89 each bind ATP. Catalysis depends on D186, which acts as the Proton acceptor. The TXY motif lies at 218-220 (TEY).

This sequence belongs to the protein kinase superfamily. CMGC Ser/Thr protein kinase family. MAP kinase subfamily. As to quaternary structure, interacts with SIPKK.

The catalysed reaction is L-tyrosyl-[protein] + ATP = O-phospho-L-tyrosyl-[protein] + ADP + H(+). The enzyme catalyses L-seryl-[protein] + ATP = O-phospho-L-seryl-[protein] + ADP + H(+). It carries out the reaction L-threonyl-[protein] + ATP = O-phospho-L-threonyl-[protein] + ADP + H(+). With respect to regulation, activated by threonine and tyrosine phosphorylation. Functionally, phosphorylates myelin basic protein (MBP) in vitro. May be involved in disease resistance. This is Mitogen-activated protein kinase SIPK from Nicotiana tabacum (Common tobacco).